The following is a 157-amino-acid chain: Ribosome maturation factor RimP (157 aa).

This sequence belongs to the RimP family.

The protein resides in the cytoplasm. Required for maturation of 30S ribosomal subunits. The polypeptide is Ribosome maturation factor RimP (Thermosynechococcus vestitus (strain NIES-2133 / IAM M-273 / BP-1)).